The chain runs to 560 residues: 5'-nucleotidase (560 aa).

A signal peptide spans methionine 1–glycine 21. Cysteine 22 carries N-palmitoyl cysteine lipidation. A lipid anchor (S-diacylglycerol cysteine) is attached at cysteine 22. A divalent metal cation is bound by residues aspartate 45, histidine 47, aspartate 88, asparagine 120, histidine 221, histidine 256, and glutamine 258. Substrate-binding positions include phenylalanine 432 and tyrosine 501–aspartate 507.

Belongs to the 5'-nucleotidase family. The cofactor is chloride. Requires Mg(2+) as cofactor.

The protein resides in the cell outer membrane. The catalysed reaction is a ribonucleoside 5'-phosphate + H2O = a ribonucleoside + phosphate. Its function is as follows. Degradation of extracellular 5'-nucleotides for nutritional needs. The polypeptide is 5'-nucleotidase (nutA) (Vibrio parahaemolyticus serotype O3:K6 (strain RIMD 2210633)).